A 396-amino-acid polypeptide reads, in one-letter code: L-lactate dehydrogenase (396 aa).

Residues methionine 1–glycine 380 form the FMN hydroxy acid dehydrogenase domain. Substrate is bound at residue tyrosine 24. Residues serine 106 and glutamine 127 each coordinate FMN. Residue tyrosine 129 participates in substrate binding. Threonine 155 is an FMN binding site. A substrate-binding site is contributed by arginine 164. Lysine 251 is an FMN binding site. Residue histidine 275 is the Proton acceptor of the active site. A substrate-binding site is contributed by arginine 278. Aspartate 306–arginine 330 contacts FMN.

The protein belongs to the FMN-dependent alpha-hydroxy acid dehydrogenase family. It depends on FMN as a cofactor.

Its subcellular location is the cell inner membrane. It carries out the reaction (S)-lactate + A = pyruvate + AH2. Functionally, catalyzes the conversion of L-lactate to pyruvate. Is coupled to the respiratory chain. The protein is L-lactate dehydrogenase of Salmonella enteritidis PT4 (strain P125109).